The primary structure comprises 600 residues: ATP-dependent lipid A-core flippase (600 aa).

4 consecutive transmembrane segments (helical) span residues 26–46 (VGIFLLSILGFVIFASTQPML), 82–102 (LLIVLIAAWQGLGSFLGNYFL), 167–187 (VFLFIYLLMMNWKLTLVMLAI), and 266–286 (PMLQLVIYSAMAVLMFLVLFL). An ABC transmembrane type-1 domain is found at 30 to 321 (LLSILGFVIF…LSEVSSTIQK (292 aa)). The region spanning 353 to 589 (LEVKNLSFFY…NGYYARLHAM (237 aa)) is the ABC transporter domain. 387–394 (GRSGSGKS) lines the ATP pocket.

Belongs to the ABC transporter superfamily. Lipid exporter (TC 3.A.1.106) family. In terms of assembly, homodimer.

It localises to the cell inner membrane. It catalyses the reaction ATP + H2O + lipid A-core oligosaccharideSide 1 = ADP + phosphate + lipid A-core oligosaccharideSide 2.. Involved in lipopolysaccharide (LPS) biosynthesis. Translocates lipid A-core from the inner to the outer leaflet of the inner membrane. Transmembrane domains (TMD) form a pore in the inner membrane and the ATP-binding domain (NBD) is responsible for energy generation. The sequence is that of ATP-dependent lipid A-core flippase from Pseudomonas syringae pv. tomato (strain ATCC BAA-871 / DC3000).